Reading from the N-terminus, the 133-residue chain is Fluoride-specific ion channel FluC (133 aa).

Transmembrane regions (helical) follow at residues 12 to 32 (LAMTGGALGSGLRFAIGASLI), 41 to 61 (WGTLTVNLLGSFVAGVLLVWL), 76 to 96 (IVGVIGGLTTFSSLMMECLVF), and 104 to 124 (MIGIYLAVTLLAGLALVFAGA). Na(+) contacts are provided by G81 and T84.

This sequence belongs to the fluoride channel Fluc/FEX (TC 1.A.43) family.

The protein localises to the cell inner membrane. The catalysed reaction is fluoride(in) = fluoride(out). Na(+) is not transported, but it plays an essential structural role and its presence is essential for fluoride channel function. Fluoride-specific ion channel. Important for reducing fluoride concentration in the cell, thus reducing its toxicity. This Xanthomonas axonopodis pv. citri (strain 306) protein is Fluoride-specific ion channel FluC.